The following is a 291-amino-acid chain: MAVVTIKNLLESGVHFGHQVRRWDPRMKKYIFAERNGIHIIDLQKTITAIREAYDMVRRTVSSGKSVLFVGTKKQSQQTIAKEAQRCGMFYVTNRWLGGMLTNFSTIRKSLSRLKKIERMEIDGTFEHLSKKEVASLRKEHAKLEKNLGGIKEMKELPGVVFIIDTRKETIAIREARRVGIPIVAVVDTNCNPEGIDYPIPGNDDAIRAISLFTQLIANAVMEAGNEHGLKIIENLQDEESGDELDESVSLHEEGREITDYENYTPPEEREYSVNDEGDVFDEDESLYEGR.

Positions 238–247 (DEESGDELDE) are enriched in acidic residues. The disordered stretch occupies residues 238–291 (DEESGDELDESVSLHEEGREITDYENYTPPEEREYSVNDEGDVFDEDESLYEGR). The segment covering 249–259 (VSLHEEGREIT) has biased composition (basic and acidic residues). Residues 274-291 (VNDEGDVFDEDESLYEGR) show a composition bias toward acidic residues.

The protein belongs to the universal ribosomal protein uS2 family.

This Treponema pallidum (strain Nichols) protein is Small ribosomal subunit protein uS2 (rpsB).